A 496-amino-acid chain; its full sequence is Glycerol kinase 2 (496 aa).

Thr-11 is an ADP binding site. ATP-binding residues include Thr-11, Thr-12, and Ser-13. Thr-11 is a sn-glycerol 3-phosphate binding site. Arg-15 lines the ADP pocket. 4 residues coordinate sn-glycerol 3-phosphate: Arg-81, Glu-82, Tyr-133, and Asp-242. Glycerol is bound by residues Arg-81, Glu-82, Tyr-133, Asp-242, and Gln-243. The ADP site is built by Thr-264 and Gly-307. ATP contacts are provided by Thr-264, Gly-307, Gln-311, and Gly-408. Gly-408 and Asn-412 together coordinate ADP.

It belongs to the FGGY kinase family.

It catalyses the reaction glycerol + ATP = sn-glycerol 3-phosphate + ADP + H(+). Its pathway is polyol metabolism; glycerol degradation via glycerol kinase pathway; sn-glycerol 3-phosphate from glycerol: step 1/1. Its activity is regulated as follows. Inhibited by fructose 1,6-bisphosphate (FBP). Key enzyme in the regulation of glycerol uptake and metabolism. Catalyzes the phosphorylation of glycerol to yield sn-glycerol 3-phosphate. This Thermotoga maritima (strain ATCC 43589 / DSM 3109 / JCM 10099 / NBRC 100826 / MSB8) protein is Glycerol kinase 2.